The chain runs to 55 residues: Large ribosomal subunit protein bL33 (55 aa).

The span at 1–11 (MAKSGRDKIKL) shows a compositional bias: basic and acidic residues. The tract at residues 1–27 (MAKSGRDKIKLESTAGTGHFYTTTKNK) is disordered. Residues 14-24 (TAGTGHFYTTT) are compositionally biased toward polar residues.

It belongs to the bacterial ribosomal protein bL33 family.

This Herminiimonas arsenicoxydans protein is Large ribosomal subunit protein bL33.